Reading from the N-terminus, the 251-residue chain is Flap endonuclease Xni (251 aa).

Asp104 provides a ligand contact to Mg(2+). Residues 160-249 form the 5'-3' exonuclease domain; it reads VSPGQLADFW…LDGNLQQLRL (90 aa). Residues Leu171, Ala172, Pro180, Val182, and Ile185 each coordinate K(+). The interaction with DNA stretch occupies residues 184–189; the sequence is GIGPKS.

It belongs to the Xni family. Requires Mg(2+) as cofactor. The cofactor is K(+).

In terms of biological role, has flap endonuclease activity. During DNA replication, flap endonucleases cleave the 5'-overhanging flap structure that is generated by displacement synthesis when DNA polymerase encounters the 5'-end of a downstream Okazaki fragment. The protein is Flap endonuclease Xni of Cronobacter sakazakii (strain ATCC BAA-894) (Enterobacter sakazakii).